Consider the following 184-residue polypeptide: ATP synthase subunit b, chloroplastic (184 aa).

Residues 27–49 (LATNPINLSVVFGVLIFFGKGVL) form a helical membrane-spanning segment.

It belongs to the ATPase B chain family. As to quaternary structure, F-type ATPases have 2 components, F(1) - the catalytic core - and F(0) - the membrane proton channel. F(1) has five subunits: alpha(3), beta(3), gamma(1), delta(1), epsilon(1). F(0) has four main subunits: a(1), b(1), b'(1) and c(10-14). The alpha and beta chains form an alternating ring which encloses part of the gamma chain. F(1) is attached to F(0) by a central stalk formed by the gamma and epsilon chains, while a peripheral stalk is formed by the delta, b and b' chains.

It localises to the plastid. The protein localises to the chloroplast thylakoid membrane. Functionally, f(1)F(0) ATP synthase produces ATP from ADP in the presence of a proton or sodium gradient. F-type ATPases consist of two structural domains, F(1) containing the extramembraneous catalytic core and F(0) containing the membrane proton channel, linked together by a central stalk and a peripheral stalk. During catalysis, ATP synthesis in the catalytic domain of F(1) is coupled via a rotary mechanism of the central stalk subunits to proton translocation. Its function is as follows. Component of the F(0) channel, it forms part of the peripheral stalk, linking F(1) to F(0). The chain is ATP synthase subunit b, chloroplastic from Barbarea verna (Land cress).